A 66-amino-acid polypeptide reads, in one-letter code: Large ribosomal subunit protein uL29 (66 aa).

The protein belongs to the universal ribosomal protein uL29 family.

The chain is Large ribosomal subunit protein uL29 from Thermococcus onnurineus (strain NA1).